The following is a 141-amino-acid chain: Hemoglobin subunit alpha (141 aa).

In terms of domain architecture, Globin spans 2-141 (AFTACEKQTI…ICQELSSRYR (140 aa)). An O2-binding site is contributed by histidine 59. Histidine 88 serves as a coordination point for heme b.

This sequence belongs to the globin family. Heterotetramer of two alpha chains and two beta chains. In terms of tissue distribution, red blood cells.

Functionally, involved in oxygen transport from gills to the various peripheral tissues. The sequence is that of Hemoglobin subunit alpha (HBA) from Mustelus griseus (Spotless smooth-hound).